A 211-amino-acid chain; its full sequence is Thiamine-phosphate synthase (211 aa).

4-amino-2-methyl-5-(diphosphooxymethyl)pyrimidine-binding positions include 37–41 (QLRIK) and N69. Mg(2+)-binding residues include D70 and D89. S108 is a 4-amino-2-methyl-5-(diphosphooxymethyl)pyrimidine binding site. 2-[(2R,5Z)-2-carboxy-4-methylthiazol-5(2H)-ylidene]ethyl phosphate is bound at residue 134-136 (TQT). K137 is a 4-amino-2-methyl-5-(diphosphooxymethyl)pyrimidine binding site. 2-[(2R,5Z)-2-carboxy-4-methylthiazol-5(2H)-ylidene]ethyl phosphate-binding positions include G166 and 186–187 (VS).

It belongs to the thiamine-phosphate synthase family. Mg(2+) serves as cofactor.

It carries out the reaction 2-[(2R,5Z)-2-carboxy-4-methylthiazol-5(2H)-ylidene]ethyl phosphate + 4-amino-2-methyl-5-(diphosphooxymethyl)pyrimidine + 2 H(+) = thiamine phosphate + CO2 + diphosphate. It catalyses the reaction 2-(2-carboxy-4-methylthiazol-5-yl)ethyl phosphate + 4-amino-2-methyl-5-(diphosphooxymethyl)pyrimidine + 2 H(+) = thiamine phosphate + CO2 + diphosphate. The enzyme catalyses 4-methyl-5-(2-phosphooxyethyl)-thiazole + 4-amino-2-methyl-5-(diphosphooxymethyl)pyrimidine + H(+) = thiamine phosphate + diphosphate. Its pathway is cofactor biosynthesis; thiamine diphosphate biosynthesis; thiamine phosphate from 4-amino-2-methyl-5-diphosphomethylpyrimidine and 4-methyl-5-(2-phosphoethyl)-thiazole: step 1/1. Condenses 4-methyl-5-(beta-hydroxyethyl)thiazole monophosphate (THZ-P) and 2-methyl-4-amino-5-hydroxymethyl pyrimidine pyrophosphate (HMP-PP) to form thiamine monophosphate (TMP). The polypeptide is Thiamine-phosphate synthase (Escherichia coli O1:K1 / APEC).